We begin with the raw amino-acid sequence, 433 residues long: Glutamate-1-semialdehyde 2,1-aminomutase (433 aa).

Lys272 carries the post-translational modification N6-(pyridoxal phosphate)lysine.

The protein belongs to the class-III pyridoxal-phosphate-dependent aminotransferase family. HemL subfamily. As to quaternary structure, homodimer. Pyridoxal 5'-phosphate is required as a cofactor.

The protein resides in the cytoplasm. The enzyme catalyses (S)-4-amino-5-oxopentanoate = 5-aminolevulinate. The protein operates within porphyrin-containing compound metabolism; protoporphyrin-IX biosynthesis; 5-aminolevulinate from L-glutamyl-tRNA(Glu): step 2/2. Its pathway is porphyrin-containing compound metabolism; chlorophyll biosynthesis. This Synechococcus sp. (strain WH7803) protein is Glutamate-1-semialdehyde 2,1-aminomutase.